The primary structure comprises 359 residues: DNA integrity scanning protein DisA (359 aa).

In terms of domain architecture, DAC spans 7-145; the sequence is DPTGRAVLRA…DGRRWVLEDS (139 aa). Residues Gly-74, Leu-92, and 105 to 109 contribute to the ATP site; that span reads TRHRT.

Belongs to the DisA family. In terms of assembly, homooctamer. It depends on Mg(2+) as a cofactor.

The enzyme catalyses 2 ATP = 3',3'-c-di-AMP + 2 diphosphate. Its function is as follows. Participates in a DNA-damage check-point. DisA forms globular foci that rapidly scan along the chromosomes searching for lesions. In terms of biological role, also has diadenylate cyclase activity, catalyzing the condensation of 2 ATP molecules into cyclic di-AMP (c-di-AMP). c-di-AMP likely acts as a signaling molecule that may couple DNA integrity with a cellular process. The chain is DNA integrity scanning protein DisA from Beutenbergia cavernae (strain ATCC BAA-8 / DSM 12333 / CCUG 43141 / JCM 11478 / NBRC 16432 / NCIMB 13614 / HKI 0122).